Consider the following 188-residue polypeptide: dCTP deaminase (188 aa).

DCTP is bound by residues 111-116, 135-137, Gln156, Tyr170, and Gln180; these read KSTYAR and TLE. The Proton donor/acceptor role is filled by Glu137.

It belongs to the dCTP deaminase family. As to quaternary structure, homotrimer.

It carries out the reaction dCTP + H2O + H(+) = dUTP + NH4(+). It functions in the pathway pyrimidine metabolism; dUMP biosynthesis; dUMP from dCTP (dUTP route): step 1/2. Catalyzes the deamination of dCTP to dUTP. This Pseudomonas syringae pv. tomato (strain ATCC BAA-871 / DC3000) protein is dCTP deaminase.